A 37-amino-acid polypeptide reads, in one-letter code: Potassium channel toxin alpha-KTx 15.1 (37 aa).

Q1 carries the post-translational modification Pyrrolidone carboxylic acid. Disulfide bonds link C8–C28, C13–C33, and C17–C35.

It belongs to the short scorpion toxin superfamily. Potassium channel inhibitor family. Alpha-KTx 15 subfamily. In terms of tissue distribution, expressed by the venom gland.

The protein resides in the secreted. Blocker of voltage-gated potassium channels (600 nM of the toxin induces a block of 25% of hERG currents). May also inhibit Kv4/KCND when coexpressed with DPP6 or DPP10. In adult rat brain, it blocks the transient potassium channels in cerebellum granular cells. Blocks potassium channels by a simple 'plugging mechanism', in which a single toxin molecule finds a specific receptor site in the external vestibule of the potassium channel and thereby occludes the outer entry to the potassium conducting pore. The chain is Potassium channel toxin alpha-KTx 15.1 from Androctonus australis (Sahara scorpion).